The chain runs to 1007 residues: RNA-binding protein 26 (1007 aa).

Residue lysine 94 forms a Glycyl lysine isopeptide (Lys-Gly) (interchain with G-Cter in SUMO2) linkage. Residue lysine 106 forms a Glycyl lysine isopeptide (Lys-Gly) (interchain with G-Cter in SUMO1); alternate linkage. A Glycyl lysine isopeptide (Lys-Gly) (interchain with G-Cter in SUMO2); alternate cross-link involves residue lysine 106. Residues 106–118 show a composition bias toward basic and acidic residues; the sequence is KKEEITKEEEREK. The segment at 106 to 241 is disordered; it reads KKEEITKEEE…YTPVSSVPSI (136 aa). The residue at position 127 (serine 127) is a Phosphoserine. The segment covering 134–168 has biased composition (basic and acidic residues); that stretch reads RYRENRSRDERKKDDRSRKRDYDRNPPRRDSYRDR. Over residues 169-186 the composition is skewed to basic residues; sequence YNRRRGRSRSYSRSRSRS. 2 stretches are compositionally biased toward basic and acidic residues: residues 187 to 201 and 209 to 227; these read WSKERLRERDRDRSR and RSRERDLVKPKYDLDRTDP. Over residues 228 to 241 the composition is skewed to polar residues; it reads LENNYTPVSSVPSI. The C3H1-type zinc-finger motif lies at 288–316; the sequence is PMPKKRCRDYDEKGFCMRGDMCPFDHGSD. Pro residues predominate over residues 334–388; sequence QPPVVEGPPPPGLPPPPPILTPPPVNLRPPVPPPGPLPPSLPPVTGPPPPLPPLQ. Disordered regions lie at residues 334 to 404 and 460 to 519; these read QPPV…SSVP and IGLT…TNSP. Residues 394 to 404 show a composition bias toward low complexity; sequence APPNSATSSVP. Serine 496 bears the Phosphoserine mark. Lysine 510 carries the post-translational modification N6-acetyllysine. Serine 518 bears the Phosphoserine mark. One can recognise an RRM 1 domain in the interval 532–606; that stretch reads TKLELRKVPP…RFIKVYWHRE (75 aa). Serine 616 is subject to Phosphoserine. 2 coiled-coil regions span residues 719–795 and 823–847; these read DNNE…KAAS and KKMQAGEEVTELRRKYTELQLEAAK. Residues 853 to 884 are disordered; the sequence is SGRGRGIHSRGRGAVHGRGRGRGRGRGVPGHA. A compositionally biased stretch (basic residues) spans 857–877; it reads RGIHSRGRGAVHGRGRGRGRG. Positions 891–960 constitute an RRM 2 domain; the sequence is RALEISAFTE…QDLKLAWNKP (70 aa). Positions 966-1007 are disordered; the sequence is AVETEEVEPDEEEFQEESLVDDSLLQDDDEEEEDNESRSWRR. Residues 968–1000 are compositionally biased toward acidic residues; it reads ETEEVEPDEEEFQEESLVDDSLLQDDDEEEEDN.

May be involved in the turnover of nuclear polyadenylated (pA+) RNA. In Homo sapiens (Human), this protein is RNA-binding protein 26.